We begin with the raw amino-acid sequence, 640 residues long: Chaperone protein DnaK (640 aa).

Thr196 bears the Phosphothreonine; by autocatalysis mark. Disordered stretches follow at residues 510-530 (NDAK…ETKN) and 598-640 (AADA…DKDK).

It belongs to the heat shock protein 70 family.

Functionally, acts as a chaperone. The polypeptide is Chaperone protein DnaK (Prosthecochloris aestuarii (strain DSM 271 / SK 413)).